A 332-amino-acid chain; its full sequence is DnAJ-like protein slr0093 (332 aa).

Residues 6-75 (FKDYYQILGV…RQKYDQFGRY (70 aa)) enclose the J domain.

The polypeptide is DnAJ-like protein slr0093 (Synechocystis sp. (strain ATCC 27184 / PCC 6803 / Kazusa)).